Consider the following 90-residue polypeptide: Small ribosomal subunit protein bS16 (90 aa).

It belongs to the bacterial ribosomal protein bS16 family.

In Streptococcus sanguinis (strain SK36), this protein is Small ribosomal subunit protein bS16.